A 359-amino-acid chain; its full sequence is Lipopolysaccharide 1,6-galactosyltransferase (359 aa).

UDP contacts are provided by Gln244 and Glu276.

Belongs to the glycosyltransferase group 1 family. Glycosyltransferase 4 subfamily.

The catalysed reaction is alpha-D-Glc-(1-&gt;3)-[L-alpha-D-Hep-(1-&gt;7)]-4-O-PO3(2-)-L-alpha-D-Hep-(1-&gt;3)-4-O-PO3(2-)-L-alpha-D-Hep-(1-&gt;5)-[alpha-Kdo-(2-&gt;4)]-alpha-Kdo-(2-&gt;6)-lipid A + UDP-alpha-D-galactose = alpha-D-Gal-(1-&gt;6)-alpha-D-Glc-(1-&gt;3)-[L-alpha-D-Hep-(1-&gt;7)]-4-O-PO3(2-)-L-alpha-D-Hep-(1-&gt;3)-4-O-PO3(2-)-L-alpha-D-Hep-(1-&gt;5)-[alpha-Kdo-(2-&gt;4)]-alpha-Kdo-(2-&gt;6)-lipid A + UDP + H(+). Its pathway is bacterial outer membrane biogenesis; LPS core biosynthesis. In terms of biological role, galactosyltransferase involved in the biosynthesis of the core oligosaccharide region of lipopolysaccharide (LPS). Catalyzes the addition of galactose from UDP-galactose to the first glucose residue of the LPS outer core. The chain is Lipopolysaccharide 1,6-galactosyltransferase from Salmonella typhimurium (strain LT2 / SGSC1412 / ATCC 700720).